We begin with the raw amino-acid sequence, 348 residues long: Calcium-gated potassium channel TvoK (348 aa).

Transmembrane regions (helical) follow at residues Leu-19–Leu-39, Tyr-52–Val-72, and Val-80–Ile-100. Positions Lys-120 to Ser-246 constitute an RCK N-terminal domain. Positions Asp-266–Gly-348 constitute an RCK C-terminal domain.

In terms of assembly, heterooctamer composed of four full-length subunits and four soluble RCK domains.

It localises to the cell membrane. Calcium-gated potassium channel. Can also be activated by Mg(2+), Mn(2+) and Ni(2+). In Thermoplasma volcanium (strain ATCC 51530 / DSM 4299 / JCM 9571 / NBRC 15438 / GSS1), this protein is Calcium-gated potassium channel TvoK.